Consider the following 557-residue polypeptide: Aerobic glycerol-3-phosphate dehydrogenase (557 aa).

21–49 (DVVIVGGGITGAGIALDASNRGMKVALVE) is an FAD binding site.

The protein belongs to the FAD-dependent glycerol-3-phosphate dehydrogenase family. The cofactor is FAD.

The protein resides in the cytoplasm. It catalyses the reaction a quinone + sn-glycerol 3-phosphate = dihydroxyacetone phosphate + a quinol. It participates in polyol metabolism; glycerol degradation via glycerol kinase pathway; glycerone phosphate from sn-glycerol 3-phosphate (aerobic route): step 1/1. The sequence is that of Aerobic glycerol-3-phosphate dehydrogenase (glpD) from Staphylococcus epidermidis (strain ATCC 35984 / DSM 28319 / BCRC 17069 / CCUG 31568 / BM 3577 / RP62A).